A 406-amino-acid chain; its full sequence is (R)-benzylsuccinyl-CoA dehydrogenase (406 aa).

Belongs to the acyl-CoA dehydrogenase family. Homotetramer. Requires FAD as cofactor.

The catalysed reaction is (R)-2-benzylsuccinyl-CoA + oxidized [electron-transfer flavoprotein] + H(+) = (E)-2-benzylidenesuccinyl-CoA + reduced [electron-transfer flavoprotein]. The protein operates within xenobiotic degradation; toluene degradation. Its activity is regulated as follows. Inhibited by (S)-benzylsuccinyl-CoA. In terms of biological role, catalyzes the oxidation of benzylsuccinyl-CoA to benzylidenesuccinyl-CoA. This Thauera aromatica protein is (R)-benzylsuccinyl-CoA dehydrogenase (bbsG).